A 351-amino-acid polypeptide reads, in one-letter code: Beta-hexosaminidase (351 aa).

Substrate-binding positions include Asp62, Arg70, Arg134, and 164–165 (KH). Catalysis depends on His177, which acts as the Proton donor/acceptor. The Nucleophile role is filled by Asp249.

Belongs to the glycosyl hydrolase 3 family. NagZ subfamily.

It localises to the cytoplasm. The catalysed reaction is Hydrolysis of terminal non-reducing N-acetyl-D-hexosamine residues in N-acetyl-beta-D-hexosaminides.. Its pathway is cell wall biogenesis; peptidoglycan recycling. Its function is as follows. Plays a role in peptidoglycan recycling by cleaving the terminal beta-1,4-linked N-acetylglucosamine (GlcNAc) from peptide-linked peptidoglycan fragments, giving rise to free GlcNAc, anhydro-N-acetylmuramic acid and anhydro-N-acetylmuramic acid-linked peptides. The chain is Beta-hexosaminidase from Histophilus somni (strain 129Pt) (Haemophilus somnus).